Here is a 197-residue protein sequence, read N- to C-terminus: Holliday junction branch migration complex subunit RuvA (197 aa).

The domain I stretch occupies residues 1–63 (MIALLNGQLI…EDALLLFGFL (63 aa)). The tract at residues 64–142 (TETEKDLFGL…PVQAVPGNAP (79 aa)) is domain II. Residues 142–146 (PLPAE) form a flexible linker region. Residues 147–197 (TAGDLREDALSALVNLGYKENLSRKALDGIDTAPDAPLEDILKQALKLLMR) are domain III.

Belongs to the RuvA family. As to quaternary structure, homotetramer. Forms an RuvA(8)-RuvB(12)-Holliday junction (HJ) complex. HJ DNA is sandwiched between 2 RuvA tetramers; dsDNA enters through RuvA and exits via RuvB. An RuvB hexamer assembles on each DNA strand where it exits the tetramer. Each RuvB hexamer is contacted by two RuvA subunits (via domain III) on 2 adjacent RuvB subunits; this complex drives branch migration. In the full resolvosome a probable DNA-RuvA(4)-RuvB(12)-RuvC(2) complex forms which resolves the HJ.

It localises to the cytoplasm. The RuvA-RuvB-RuvC complex processes Holliday junction (HJ) DNA during genetic recombination and DNA repair, while the RuvA-RuvB complex plays an important role in the rescue of blocked DNA replication forks via replication fork reversal (RFR). RuvA specifically binds to HJ cruciform DNA, conferring on it an open structure. The RuvB hexamer acts as an ATP-dependent pump, pulling dsDNA into and through the RuvAB complex. HJ branch migration allows RuvC to scan DNA until it finds its consensus sequence, where it cleaves and resolves the cruciform DNA. The protein is Holliday junction branch migration complex subunit RuvA of Syntrophotalea carbinolica (strain DSM 2380 / NBRC 103641 / GraBd1) (Pelobacter carbinolicus).